Reading from the N-terminus, the 338-residue chain is Lipoate-protein ligase A (338 aa).

One can recognise a BPL/LPL catalytic domain in the interval 29–216 (PATQRVLFLW…AFFAHYGERV (188 aa)). ATP-binding positions include Arg-71, 76-79 (GAVF), and Lys-134. Lys-134 provides a ligand contact to (R)-lipoate.

This sequence belongs to the LplA family. As to quaternary structure, monomer.

Its subcellular location is the cytoplasm. The enzyme catalyses L-lysyl-[lipoyl-carrier protein] + (R)-lipoate + ATP = N(6)-[(R)-lipoyl]-L-lysyl-[lipoyl-carrier protein] + AMP + diphosphate + H(+). The protein operates within protein modification; protein lipoylation via exogenous pathway; protein N(6)-(lipoyl)lysine from lipoate: step 1/2. It functions in the pathway protein modification; protein lipoylation via exogenous pathway; protein N(6)-(lipoyl)lysine from lipoate: step 2/2. In terms of biological role, catalyzes both the ATP-dependent activation of exogenously supplied lipoate to lipoyl-AMP and the transfer of the activated lipoyl onto the lipoyl domains of lipoate-dependent enzymes. This chain is Lipoate-protein ligase A, found in Salmonella dublin (strain CT_02021853).